The chain runs to 369 residues: tRNA/tmRNA (uracil-C(5))-methyltransferase (369 aa).

Residues Gln-190, Tyr-218, Asn-223, Glu-239, and Asp-301 each contribute to the S-adenosyl-L-methionine site. Catalysis depends on Cys-326, which acts as the Nucleophile. Residue Glu-360 is the Proton acceptor of the active site.

This sequence belongs to the class I-like SAM-binding methyltransferase superfamily. RNA M5U methyltransferase family. TrmA subfamily.

The catalysed reaction is uridine(54) in tRNA + S-adenosyl-L-methionine = 5-methyluridine(54) in tRNA + S-adenosyl-L-homocysteine + H(+). It carries out the reaction uridine(341) in tmRNA + S-adenosyl-L-methionine = 5-methyluridine(341) in tmRNA + S-adenosyl-L-homocysteine + H(+). In terms of biological role, dual-specificity methyltransferase that catalyzes the formation of 5-methyluridine at position 54 (m5U54) in all tRNAs, and that of position 341 (m5U341) in tmRNA (transfer-mRNA). This is tRNA/tmRNA (uracil-C(5))-methyltransferase from Vibrio cholerae serotype O1 (strain ATCC 39541 / Classical Ogawa 395 / O395).